Here is a 95-residue protein sequence, read N- to C-terminus: Large ribosomal subunit protein bL27 (95 aa).

The segment at 1 to 21 (MAHKKGASSSRNGRDSNAQRL) is disordered. Polar residues predominate over residues 7–19 (ASSSRNGRDSNAQ).

Belongs to the bacterial ribosomal protein bL27 family.

This Parafrankia sp. (strain EAN1pec) protein is Large ribosomal subunit protein bL27.